Here is a 366-residue protein sequence, read N- to C-terminus: MTPEHLPTEQYEAQLAEKVARLQSMMAPFSGLVPEVFRSPVSHYRMRAEFRLWHDGDNLYHIMFDQQTKSRIRVDTFPAASQLINTLMKAMIAGVRDNHALRHKLFQIDYLTTLSNQAVVSLLYHKKLDEEWREAATALRDALRAQGLNVHLIGRATKTKIELDQDYIDERLPVAGKEIIYRQVENSFTQPNAAMNIQMLEWALEVTKDSKGDLLELYCGNGNFSLALARNFNRVLATEIAKPSVAAAQYNIAANHIDNVQIIRMAAEEFTQAMNGVREFNRLQGIDLKRYQCETIFVDPPRSGLDSETEKMVQAYPRILYISCNPETLCKNLETLSQTHTVSRLALFDQFPYTHHMECGVLLTAR.

Residues Q190, Y218, N223, E239, and D299 each contribute to the S-adenosyl-L-methionine site. Catalysis depends on C324, which acts as the Nucleophile. E358 acts as the Proton acceptor in catalysis.

It belongs to the class I-like SAM-binding methyltransferase superfamily. RNA M5U methyltransferase family. TrmA subfamily.

The catalysed reaction is uridine(54) in tRNA + S-adenosyl-L-methionine = 5-methyluridine(54) in tRNA + S-adenosyl-L-homocysteine + H(+). It carries out the reaction uridine(341) in tmRNA + S-adenosyl-L-methionine = 5-methyluridine(341) in tmRNA + S-adenosyl-L-homocysteine + H(+). In terms of biological role, dual-specificity methyltransferase that catalyzes the formation of 5-methyluridine at position 54 (m5U54) in all tRNAs, and that of position 341 (m5U341) in tmRNA (transfer-mRNA). The protein is tRNA/tmRNA (uracil-C(5))-methyltransferase of Salmonella typhi.